We begin with the raw amino-acid sequence, 468 residues long: Cytochrome P450-like protein L532 (468 aa).

The next 2 membrane-spanning stretches (helical) occupy residues Trp22–Ile42 and Val172–Val192. Cys415 lines the heme pocket.

The protein belongs to the cytochrome P450 family. The cofactor is heme.

It localises to the host membrane. The protein localises to the virion. This is Cytochrome P450-like protein L532 from Acanthamoeba polyphaga mimivirus (APMV).